We begin with the raw amino-acid sequence, 952 residues long: Probable mixed-linked glucan synthase 6 (952 aa).

2 helical membrane-spanning segments follow: residues 102 to 122 and 132 to 152; these read LLHPYRVLIFVRLIAFTLFVI and AMWLWVTSIAGEFWFGFSWLL. Asp227 is a catalytic residue. Positions 278–308 form a coiled coil; the sequence is EEFVNDRRRVRKEYDDFKARINGLEHDIKQR. Substrate is bound by residues Asp429 and Asp431. Residue Asp636 is part of the active site. 6 helical membrane-spanning segments follow: residues 718–738, 744–764, 782–802, 834–854, 865–885, and 898–918; these read LFLIFYTTVPALSFVTGHFIV, MFYVYLAIVLGTLLILAVLEV, MTASCSAYLAAVLQVVTKVVF, WLMITPIIIILVNIIGSAVAF, WLKVAGGVFFNFWVLFHLYPF, and VVVLVWWAFTFVITAVLYINI.

This sequence belongs to the glycosyltransferase 2 family. Plant cellulose synthase-like F subfamily.

The protein localises to the golgi apparatus membrane. In terms of biological role, may catalyze both beta-1,3 and beta-1,4 glycosidic linkage on beta-D-glucan. Essential for (1,3;1,4)-beta-D-glucans synthesis in grasses and cereals (Poaceae). The mixed-linked glucans (which are not present in walls of dicotyledons or most other monocotyledonous plants) are particularly important constituents of the walls of the starchy endosperm and aleurone cells of cereal grains such as oats, wheat, rice and barley. They can account for up to 70% by weight of the wall. The chain is Probable mixed-linked glucan synthase 6 (CSLF6) from Oryza sativa subsp. japonica (Rice).